The primary structure comprises 895 residues: Endochitinase 2 (895 aa).

Positions 1 to 22 (MGLTNILAAFIAVSSLFIQSLA) are cleaved as a signal peptide. The GH18 domain maps to 29–340 (SNLAVYWGQG…DIMKEVLLRC (312 aa)). An N-linked (GlcNAc...) asparagine glycan is attached at Asn90. The active-site Proton donor is the Glu175. The segment at 343 to 712 (DPPTSTVTST…APSSSTTEDR (370 aa)) is disordered. The segment covering 346–425 (TSTVTSTISA…ISTRSASTET (80 aa)) has biased composition (low complexity). Residues 426 to 478 (VTTRSQEPPSTTISTRPASTETVTTRSQEPPSSTISTRSASTETVTTRSQEPP) are compositionally biased toward polar residues. A compositionally biased stretch (low complexity) spans 479–505 (SSTISTRSASTETSTSSQDSPSTTIST). Positions 506 to 543 (KSAPTGTVTTRSQDLPSTTISTRSPETETETVTTKSQD) are enriched in polar residues. Residues 544-555 (SPSITLSTRSSS) show a composition bias toward low complexity. A compositionally biased stretch (polar residues) spans 556–577 (AETVSTRSQHSSSTTISTKSAP). Residues 578-589 (TETGTTSEHSTS) are compositionally biased toward low complexity. Positions 590 to 657 (MPVSTRSAST…ISTELPSQTH (68 aa)) are enriched in polar residues. Composition is skewed to low complexity over residues 658–692 (STTDSTPVSSSPTIPSGSTTIIPGTASDPVSAPTT) and 699–712 (TLTLAPSSSTTEDR). Residue Gly866 is the site of GPI-anchor amidated glycine attachment. A propeptide spans 867-895 (GAMTVRSMDVVAKALITAGAAVLGLFLGL) (removed in mature form).

It belongs to the glycosyl hydrolase 18 family. Chitinase class III subfamily.

It localises to the cell membrane. The enzyme catalyses Random endo-hydrolysis of N-acetyl-beta-D-glucosaminide (1-&gt;4)-beta-linkages in chitin and chitodextrins.. May be associated with endosporulation. The protein is Endochitinase 2 (CTS2) of Coccidioides immitis (strain RS) (Valley fever fungus).